Reading from the N-terminus, the 121-residue chain is MIQQESFLTVADNSGAKRIQCIRVLGSNRRYAHVGDVIVAAVKDAMPNMSVKKSEVVKAVVVRTKATLRRDTGNSIRFDDNAAVLINEDKNPRGTRVFGPVARELRERNFTKIVSLAPEVI.

Belongs to the universal ribosomal protein uL14 family. In terms of assembly, part of the 50S ribosomal subunit. Forms a cluster with proteins L3 and L19. In the 70S ribosome, L14 and L19 interact and together make contacts with the 16S rRNA in bridges B5 and B8.

Its function is as follows. Binds to 23S rRNA. Forms part of two intersubunit bridges in the 70S ribosome. This is Large ribosomal subunit protein uL14 from Prochlorococcus marinus (strain MIT 9313).